We begin with the raw amino-acid sequence, 194 residues long: Protein GrpE 2 (194 aa).

A compositionally biased stretch (basic and acidic residues) spans 1-17 (MNDIDKHKKETQTESKN). Residues 1–29 (MNDIDKHKKETQTESKNDLNNTTITQNNV) are disordered. The segment covering 18–29 (DLNNTTITQNNV) has biased composition (polar residues).

It belongs to the GrpE family. As to quaternary structure, homodimer.

Its subcellular location is the cytoplasm. Functionally, participates actively in the response to hyperosmotic and heat shock by preventing the aggregation of stress-denatured proteins, in association with DnaK and GrpE. It is the nucleotide exchange factor for DnaK and may function as a thermosensor. Unfolded proteins bind initially to DnaJ; upon interaction with the DnaJ-bound protein, DnaK hydrolyzes its bound ATP, resulting in the formation of a stable complex. GrpE releases ADP from DnaK; ATP binding to DnaK triggers the release of the substrate protein, thus completing the reaction cycle. Several rounds of ATP-dependent interactions between DnaJ, DnaK and GrpE are required for fully efficient folding. This Buchnera aphidicola subsp. Baizongia pistaciae (strain Bp) protein is Protein GrpE 2.